We begin with the raw amino-acid sequence, 611 residues long: Rop guanine nucleotide exchange factor 5 (611 aa).

Residues 1–62 form a disordered region; it reads MENLVKSCAG…PPPPPSQILG (62 aa). The segment covering 34–51 has biased composition (low complexity); that stretch reads STSGASYESSSTTTVASS. In terms of domain architecture, PRONE spans 93 to 477; it reads FKAKEMNSAD…DLTKQSDDNN (385 aa). 2 disordered regions span residues 513–541 and 588–611; these read TTPGFSPSMISPKKGERRTPYSSKDTNKI and DVEEEKKRNSTSVHQKGPPKYTVS. Residues 525–541 show a composition bias toward basic and acidic residues; it reads KKGERRTPYSSKDTNKI.

Its function is as follows. Guanine-nucleotide exchange factor (GEF) that acts as an activator of Rop (Rho of plants) GTPases by promoting the exchange of GDP for GTP. In Arabidopsis thaliana (Mouse-ear cress), this protein is Rop guanine nucleotide exchange factor 5 (ROPGEF5).